Consider the following 276-residue polypeptide: NAD-capped RNA hydrolase NudC (276 aa).

Arg-82 contacts substrate. Positions 112 and 115 each coordinate Zn(2+). Position 125 (Glu-125) interacts with substrate. Cys-130 and Cys-133 together coordinate Zn(2+). Residue Tyr-138 coordinates substrate. The Nudix hydrolase domain maps to 139–262; that stretch reads PRISPSMIVL…SIARYLIDLY (124 aa). Positions 172, 188, and 192 each coordinate a divalent metal cation. The Nudix box signature appears at 173–194; the sequence is GFAEPGESAEDCLIREVREEVS. Substrate is bound at residue 206–213; it reads QCWPFPHS. Glu-233 is an a divalent metal cation binding site. Substrate is bound at residue Ala-255.

The protein belongs to the Nudix hydrolase family. NudC subfamily. As to quaternary structure, homodimer. It depends on Mg(2+) as a cofactor. The cofactor is Mn(2+). Zn(2+) is required as a cofactor.

It carries out the reaction a 5'-end NAD(+)-phospho-ribonucleoside in mRNA + H2O = a 5'-end phospho-adenosine-phospho-ribonucleoside in mRNA + beta-nicotinamide D-ribonucleotide + 2 H(+). The enzyme catalyses NAD(+) + H2O = beta-nicotinamide D-ribonucleotide + AMP + 2 H(+). The catalysed reaction is NADH + H2O = reduced beta-nicotinamide D-ribonucleotide + AMP + 2 H(+). In terms of biological role, mRNA decapping enzyme that specifically removes the nicotinamide adenine dinucleotide (NAD) cap from a subset of mRNAs by hydrolyzing the diphosphate linkage to produce nicotinamide mononucleotide (NMN) and 5' monophosphate mRNA. The NAD-cap is present at the 5'-end of some mRNAs and stabilizes RNA against 5'-processing. Has preference for mRNAs with a 5'-end purine. Catalyzes the hydrolysis of a broad range of dinucleotide pyrophosphates. The chain is NAD-capped RNA hydrolase NudC from Pseudomonas fluorescens (strain ATCC BAA-477 / NRRL B-23932 / Pf-5).